We begin with the raw amino-acid sequence, 205 residues long: HTH-type transcriptional repressor KstR2 (205 aa).

Residues Ala-10–Leu-70 enclose the HTH tetR-type domain. The H-T-H motif DNA-binding region spans Thr-33–Phe-52.

Homodimer.

Controls the expression of a small regulon that may play a role in the utilization of cholesterol. This chain is HTH-type transcriptional repressor KstR2 (kstR2), found in Mycolicibacterium smegmatis (strain ATCC 700084 / mc(2)155) (Mycobacterium smegmatis).